Consider the following 205-residue polypeptide: Thiamine-phosphate synthase (205 aa).

Residues 36 to 40 (QYRRK) and D68 each bind 4-amino-2-methyl-5-(diphosphooxymethyl)pyrimidine. Residues D69 and D88 each contribute to the Mg(2+) site. Position 106 (S106) interacts with 4-amino-2-methyl-5-(diphosphooxymethyl)pyrimidine. 132 to 134 (SPT) provides a ligand contact to 2-[(2R,5Z)-2-carboxy-4-methylthiazol-5(2H)-ylidene]ethyl phosphate. K135 is a 4-amino-2-methyl-5-(diphosphooxymethyl)pyrimidine binding site. 2-[(2R,5Z)-2-carboxy-4-methylthiazol-5(2H)-ylidene]ethyl phosphate contacts are provided by residues G162 and 182 to 183 (IS).

It belongs to the thiamine-phosphate synthase family. Mg(2+) is required as a cofactor.

It catalyses the reaction 2-[(2R,5Z)-2-carboxy-4-methylthiazol-5(2H)-ylidene]ethyl phosphate + 4-amino-2-methyl-5-(diphosphooxymethyl)pyrimidine + 2 H(+) = thiamine phosphate + CO2 + diphosphate. The catalysed reaction is 2-(2-carboxy-4-methylthiazol-5-yl)ethyl phosphate + 4-amino-2-methyl-5-(diphosphooxymethyl)pyrimidine + 2 H(+) = thiamine phosphate + CO2 + diphosphate. The enzyme catalyses 4-methyl-5-(2-phosphooxyethyl)-thiazole + 4-amino-2-methyl-5-(diphosphooxymethyl)pyrimidine + H(+) = thiamine phosphate + diphosphate. It participates in cofactor biosynthesis; thiamine diphosphate biosynthesis; thiamine phosphate from 4-amino-2-methyl-5-diphosphomethylpyrimidine and 4-methyl-5-(2-phosphoethyl)-thiazole: step 1/1. Its function is as follows. Condenses 4-methyl-5-(beta-hydroxyethyl)thiazole monophosphate (THZ-P) and 2-methyl-4-amino-5-hydroxymethyl pyrimidine pyrophosphate (HMP-PP) to form thiamine monophosphate (TMP). The polypeptide is Thiamine-phosphate synthase (Caldivirga maquilingensis (strain ATCC 700844 / DSM 13496 / JCM 10307 / IC-167)).